The chain runs to 678 residues: Glycine--tRNA ligase beta subunit (678 aa).

Belongs to the class-II aminoacyl-tRNA synthetase family. As to quaternary structure, tetramer of two alpha and two beta subunits.

The protein resides in the cytoplasm. It catalyses the reaction tRNA(Gly) + glycine + ATP = glycyl-tRNA(Gly) + AMP + diphosphate. This Sulfurihydrogenibium sp. (strain YO3AOP1) protein is Glycine--tRNA ligase beta subunit.